A 98-amino-acid polypeptide reads, in one-letter code: uncharacterized protein (98 aa).

Belongs to the CFAP97 family. As to expression, expressed in a number of tissues including brain, thymus, lung, heart, liver, spleen, kidney and testis.

This is an uncharacterized protein from Mus musculus (Mouse).